A 213-amino-acid polypeptide reads, in one-letter code: Protein-L-isoaspartate O-methyltransferase (213 aa).

S61 is an active-site residue.

Belongs to the methyltransferase superfamily. L-isoaspartyl/D-aspartyl protein methyltransferase family.

It is found in the cytoplasm. The enzyme catalyses [protein]-L-isoaspartate + S-adenosyl-L-methionine = [protein]-L-isoaspartate alpha-methyl ester + S-adenosyl-L-homocysteine. Catalyzes the methyl esterification of L-isoaspartyl residues in peptides and proteins that result from spontaneous decomposition of normal L-aspartyl and L-asparaginyl residues. It plays a role in the repair and/or degradation of damaged proteins. This Maricaulis maris (strain MCS10) (Caulobacter maris) protein is Protein-L-isoaspartate O-methyltransferase.